The primary structure comprises 614 residues: BTB/POZ domain-containing protein At5g48800 (614 aa).

In terms of domain architecture, BTB spans 43–111 (SDITIEVNGG…CYGINFEITS (69 aa)). Residues 219–484 (DWWIEDLSVL…VQVLYFEQLK (266 aa)) enclose the NPH3 domain. Tyr425 carries the phosphotyrosine modification. Disordered regions lie at residues 492–525 (SYSD…KDNY) and 583–614 (GHSS…ASTD). Over residues 507–521 (SWRINSGALSATMSP) the composition is skewed to polar residues. Residues 522-562 (KDNYASLRRENRELKLELARLRMRLNDLEKEHICMKRDMQR) are a coiled coil. Low complexity predominate over residues 583 to 597 (GHSSSRGSSSPSKQS).

This sequence belongs to the NPH3 family.

It participates in protein modification; protein ubiquitination. May act as a substrate-specific adapter of an E3 ubiquitin-protein ligase complex (CUL3-RBX1-BTB) which mediates the ubiquitination and subsequent proteasomal degradation of target proteins. The sequence is that of BTB/POZ domain-containing protein At5g48800 from Arabidopsis thaliana (Mouse-ear cress).